We begin with the raw amino-acid sequence, 589 residues long: Putative adenine deaminase BC_3012 (589 aa).

The protein belongs to the metallo-dependent hydrolases superfamily. Adenine deaminase family.

It catalyses the reaction adenine + H2O + H(+) = hypoxanthine + NH4(+). The polypeptide is Putative adenine deaminase BC_3012 (Bacillus cereus (strain ATCC 14579 / DSM 31 / CCUG 7414 / JCM 2152 / NBRC 15305 / NCIMB 9373 / NCTC 2599 / NRRL B-3711)).